The following is a 305-amino-acid chain: tRNA dimethylallyltransferase (305 aa).

8 to 15 (GPTAVGKT) contacts ATP. 10–15 (TAVGKT) contributes to the substrate binding site. The segment at 33–36 (DSRQ) is interaction with substrate tRNA.

Belongs to the IPP transferase family. In terms of assembly, monomer. Mg(2+) is required as a cofactor.

The catalysed reaction is adenosine(37) in tRNA + dimethylallyl diphosphate = N(6)-dimethylallyladenosine(37) in tRNA + diphosphate. Its function is as follows. Catalyzes the transfer of a dimethylallyl group onto the adenine at position 37 in tRNAs that read codons beginning with uridine, leading to the formation of N6-(dimethylallyl)adenosine (i(6)A). In Thermotoga petrophila (strain ATCC BAA-488 / DSM 13995 / JCM 10881 / RKU-1), this protein is tRNA dimethylallyltransferase.